The following is a 390-amino-acid chain: Phosphoglycerate kinase (390 aa).

Substrate contacts are provided by residues 21–23 (DMN), Arg36, 59–62 (HLGR), Arg113, and Arg146. ATP is bound by residues Lys197, Glu319, and 345–348 (GGDT).

The protein belongs to the phosphoglycerate kinase family. Monomer.

It localises to the cytoplasm. The enzyme catalyses (2R)-3-phosphoglycerate + ATP = (2R)-3-phospho-glyceroyl phosphate + ADP. Its pathway is carbohydrate degradation; glycolysis; pyruvate from D-glyceraldehyde 3-phosphate: step 2/5. The protein is Phosphoglycerate kinase of Laribacter hongkongensis (strain HLHK9).